The primary structure comprises 461 residues: tRNA modification GTPase MnmE (461 aa).

3 residues coordinate (6S)-5-formyl-5,6,7,8-tetrahydrofolate: Arg-23, Glu-88, and Arg-127. The region spanning 223 to 383 is the TrmE-type G domain; that stretch reads GLNTVIVGKP…LKECIKNLFF (161 aa). Asn-233 is a K(+) binding site. GTP-binding positions include 233–238, 252–258, and 277–280; these read NVGKSS, TEIPGTT, and DTAG. Ser-237 serves as a coordination point for Mg(2+). The K(+) site is built by Thr-252, Ile-254, and Thr-257. Thr-258 provides a ligand contact to Mg(2+). A (6S)-5-formyl-5,6,7,8-tetrahydrofolate-binding site is contributed by Lys-461.

The protein belongs to the TRAFAC class TrmE-Era-EngA-EngB-Septin-like GTPase superfamily. TrmE GTPase family. As to quaternary structure, homodimer. Heterotetramer of two MnmE and two MnmG subunits. Requires K(+) as cofactor.

The protein localises to the cytoplasm. Its function is as follows. Exhibits a very high intrinsic GTPase hydrolysis rate. Involved in the addition of a carboxymethylaminomethyl (cmnm) group at the wobble position (U34) of certain tRNAs, forming tRNA-cmnm(5)s(2)U34. The chain is tRNA modification GTPase MnmE from Clostridium botulinum (strain Loch Maree / Type A3).